The primary structure comprises 186 residues: Ribosome-recycling factor (186 aa).

This sequence belongs to the RRF family.

It is found in the cytoplasm. Responsible for the release of ribosomes from messenger RNA at the termination of protein biosynthesis. May increase the efficiency of translation by recycling ribosomes from one round of translation to another. The sequence is that of Ribosome-recycling factor from Bordetella parapertussis (strain 12822 / ATCC BAA-587 / NCTC 13253).